The primary structure comprises 295 residues: MNGGSDLKHATGSGSDPKHAAEMDPDSDAGQVAVALAYQRFEPRAYLRNNYAPPRGDLSNPDGVGPWKLRCMAQVFATGEVSGRVLIDIGSGPTIYQLLSACAHFEDITMTDFLEVNRQELGLWLREEPGAFDWSVYSQHACLIEDKGESWQEKERQLRARVKRVLPIDVHKPQPLGTPSLVPLPADALVSAFCLEAVSPDLTSFQRALHHITTLLRPGGHLLLIGALEESWYLAGEARLSVVPVSEEEVREALVLGGYEVRELRTYIMPAHLCTGVDDVKGIFFAWAQKMEVQV.

Residues 1 to 26 (MNGGSDLKHATGSGSDPKHAAEMDPD) form a disordered region. 2 repeat units span residues 4-10 (GSDLKHA) and 14-20 (GSDPKHA). The interval 4 to 20 (GSDLKHATGSGSDPKHA) is 2 X 7 AA repeats of G-S-D-[LP]-K-H-A. Residues tyrosine 46, tyrosine 51, 90-91 (GS), tyrosine 96, aspartate 112, asparagine 117, 169-170 (DV), and alanine 192 contribute to the S-adenosyl-L-methionine site. Octopamine-binding residues include glutamate 230 and aspartate 278.

Belongs to the class I-like SAM-binding methyltransferase superfamily. NNMT/PNMT/TEMT family. In terms of tissue distribution, brain (pons and medulla oblongata), adrenal gland, retina and heart.

The enzyme catalyses phenylethanolamine + S-adenosyl-L-methionine = N-methylphenylethanolamine + S-adenosyl-L-homocysteine + H(+). The catalysed reaction is (R)-noradrenaline + S-adenosyl-L-methionine = (R)-adrenaline + S-adenosyl-L-homocysteine + H(+). It catalyses the reaction (R)-normetanephrine + S-adenosyl-L-methionine = (R)-metanephrine + S-adenosyl-L-homocysteine + H(+). It carries out the reaction (R)-octopamine + S-adenosyl-L-methionine = (R)-synephrine + S-adenosyl-L-homocysteine + H(+). The protein operates within catecholamine biosynthesis; (R)-adrenaline biosynthesis; (R)-adrenaline from (R)-noradrenaline: step 1/1. Functionally, catalyzes the transmethylation of nonepinephrine (noradrenaline) to form epinephrine (adrenaline), using S-adenosyl-L-methionine as the methyl donor. Other substrates include phenylethanolamine, octopamine and normetanephrine. This Mus musculus (Mouse) protein is Phenylethanolamine N-methyltransferase (Pnmt).